The sequence spans 25 residues: Acyl carrier protein (25 aa).

Residues 2 to 25 (ESIEQRVKKIVAEQLGVAEAEIKA) enclose the Carrier domain.

This sequence belongs to the acyl carrier protein (ACP) family. Post-translationally, 4'-phosphopantetheine is transferred from CoA to a specific serine of apo-ACP by AcpS. This modification is essential for activity because fatty acids are bound in thioester linkage to the sulfhydryl of the prosthetic group.

The protein localises to the cytoplasm. It participates in lipid metabolism; fatty acid biosynthesis. Carrier of the growing fatty acid chain in fatty acid biosynthesis. The sequence is that of Acyl carrier protein (acpP) from Alcaligenes faecalis.